The chain runs to 196 residues: SPRY domain-containing protein 7 (196 aa).

At A2 the chain carries N-acetylalanine. One can recognise a B30.2/SPRY domain in the interval A2–P184.

The polypeptide is SPRY domain-containing protein 7 (SPRYD7) (Homo sapiens (Human)).